Here is a 141-residue protein sequence, read N- to C-terminus: Neuropeptides CP2 (141 aa).

A signal peptide spans 1-26; the sequence is MDSRICTSFARLMASALCVSTLLVTA. The interval 75–94 is disordered; sequence KVDMPLPRQRTSSRSSERWA. The residue at position 140 (His140) is a Histidine amide.

In terms of tissue distribution, neurons.

It is found in the secreted. Functionally, mediates intrinsic neuromodulation. This chain is Neuropeptides CP2 (CP2PP), found in Aplysia californica (California sea hare).